Consider the following 224-residue polypeptide: Peptidyl-prolyl cis-trans isomerase FKBP3 (224 aa).

At A2 the chain carries N-acetylalanine. A Phosphoserine modification is found at S36. A compositionally biased stretch (basic and acidic residues) spans K89–E102. A disordered region spans residues K89–Y111. At K99 the chain carries N6-acetyllysine. Residues G128 to D224 enclose the PPIase FKBP-type domain. S152 is modified (phosphoserine). N6-acetyllysine is present on K170.

Belongs to the FKBP-type PPIase family.

The protein localises to the nucleus. The catalysed reaction is [protein]-peptidylproline (omega=180) = [protein]-peptidylproline (omega=0). Its activity is regulated as follows. Inhibited preferentially by rapamycin over FK506. Its function is as follows. FK506- and rapamycin-binding proteins (FKBPs) constitute a family of receptors for the two immunosuppressants which inhibit T-cell proliferation by arresting two distinct cytoplasmic signal transmission pathways. PPIases accelerate the folding of proteins. This chain is Peptidyl-prolyl cis-trans isomerase FKBP3 (FKBP3), found in Homo sapiens (Human).